A 234-amino-acid polypeptide reads, in one-letter code: MNYINLPTVLPGSPSKTRGQIQVILGPMFSGKSTELMRRVRRFQIAQNKCLVIKYAKDTRYSSSFSTHDRNTMDALPACLLRDVAQEALGAAVIGIDEGQFFPDIVEFCEVMANAGKTVIVAALDGTFQRKAFGSILNLVPLAESVVKLTAVCMECFREAAYTKRLGLEKEVEVIGGADKYHSVCRVCYFKKSSVQPAGPDNKENCPVLGQPGEASAVRKLFAPQQVLQHNSTN.

Ser13 bears the Phosphoserine mark. ATP is bound by residues 26-33 (GPMFSGKS), 58-60 (DTR), and 97-100 (DEGQ). Residue Glu98 is the Proton acceptor of the active site. Phe128 contributes to the substrate binding site. Cys153 and Cys156 together coordinate Zn(2+). Substrate-binding positions include 172-176 (VEVIG) and Tyr181. 2 residues coordinate Zn(2+): Cys185 and Cys188. Residues 203 to 205 (KEN) carry the KEN box motif.

It belongs to the thymidine kinase family. Homotetramer. Tetramerization from dimerization is induced by ATP and increases catalytic efficiency due to a high affinity for thymidine. Tetramerization is inhibited by phosphorylation at Ser-13. Interacts (via the KEN box) with FZR1. Phosphorylated on Ser-13 in mitosis. Phosphorylation of Ser-13 by CDK1 during mitosis reduces homotetramerization and catalytic efficiency when DNA replication is complete and intracellular TK1 is still present at a high level. Post-translationally, polyubiquitinated. Postmitosis, ubiquitination leads to proteasomal degradation. The KEN box sequence located at the C-terminal region targets for degradation by the anaphase promoting complex (APC/C) activated and rate-limited by FZR1.

The protein resides in the cytoplasm. It carries out the reaction thymidine + ATP = dTMP + ADP + H(+). Its function is as follows. Cell-cycle-regulated enzyme of importance in nucleotide metabolism. Catalyzes the first enzymatic step in the salvage pathway converting thymidine into thymidine monophosphate. Transcriptional regulation limits expression to the S phase of the cell cycle and transient expression coincides with the oscillation in the intracellular dTTP concentration. In Cricetulus griseus (Chinese hamster), this protein is Thymidine kinase, cytosolic (TK1).